Consider the following 257-residue polypeptide: Tryptophan synthase alpha chain (257 aa).

Active-site proton acceptor residues include Glu-47 and Asp-58.

Belongs to the TrpA family. As to quaternary structure, tetramer of two alpha and two beta chains.

The enzyme catalyses (1S,2R)-1-C-(indol-3-yl)glycerol 3-phosphate + L-serine = D-glyceraldehyde 3-phosphate + L-tryptophan + H2O. The protein operates within amino-acid biosynthesis; L-tryptophan biosynthesis; L-tryptophan from chorismate: step 5/5. Functionally, the alpha subunit is responsible for the aldol cleavage of indoleglycerol phosphate to indole and glyceraldehyde 3-phosphate. The polypeptide is Tryptophan synthase alpha chain (Listeria innocua serovar 6a (strain ATCC BAA-680 / CLIP 11262)).